Here is a 467-residue protein sequence, read N- to C-terminus: Flagellum-specific ATP synthase (467 aa).

An ATP-binding site is contributed by 195–202 (SSSGIGKS).

It belongs to the ATPase alpha/beta chains family.

It localises to the cytoplasm. It catalyses the reaction ATP + H2O + 4 H(+)(in) = ADP + phosphate + 5 H(+)(out). Its function is as follows. Probable catalytic subunit of a protein translocase for flagellum-specific export, or a proton translocase involved in local circuits at the flagellum. May be involved in a specialized protein export pathway that proceeds without signal peptide cleavage. The chain is Flagellum-specific ATP synthase (fliI) from Buchnera aphidicola subsp. Acyrthosiphon pisum (strain APS) (Acyrthosiphon pisum symbiotic bacterium).